Reading from the N-terminus, the 2131-residue chain is Sodium channel protein para (2131 aa).

The Cytoplasmic segment spans residues 1–148; it reads MTEDSDSISE…FNPIRRVAIY (148 aa). A compositionally biased stretch (basic and acidic residues) spans 35–48; the sequence is HEKQKELERKRAEG. The segment at 35–84 is disordered; sequence HEKQKELERKRAEGEVPQYGRKKKQKEIRYDDEDEDEGPQPDPTLEQGVP. Acidic residues predominate over residues 64-73; that stretch reads YDDEDEDEGP. The I repeat unit spans residues 134 to 467; the sequence is WMLDPFNPIR…AAKAAKLEER (334 aa). Residues 149–172 form a helical membrane-spanning segment; that stretch reads ILVHPLFSLFIITTILVNCILMIM. The Extracellular segment spans residues 173 to 180; the sequence is PTTPTVES. A helical membrane pass occupies residues 181-199; that stretch reads TEVIFTGIYTFESAVKVMA. Residues 200-212 are Cytoplasmic-facing; it reads RGFILCPFTYLRD. A helical membrane pass occupies residues 213–231; the sequence is AWNWLDFVVIALAYVTMGI. At 232-237 the chain is on the extracellular side; the sequence is DLGNLA. Residues 238–257 traverse the membrane as a helical; Voltage-sensor segment; that stretch reads ALRTFRVLRALKTVAIVPGL. Residues 258–273 are Cytoplasmic-facing; that stretch reads KTIVGAVIESVKNLRD. Residues 274 to 297 traverse the membrane as a helical segment; it reads VIILTMFSLSVFALMGLQIYMGVL. Residues 298–373 are Extracellular-facing; the sequence is TQKCIKKFPL…PNYGYTSFDS (76 aa). C301 and C350 are disulfide-bonded. Residues N313, N325, and N343 are each glycosylated (N-linked (GlcNAc...) asparagine). The segment at residues 374–398 is an intramembrane region (pore-forming); that stretch reads FGWAFLSAFRLMTQDFWEDLYQLVL. Topologically, residues 399–405 are extracellular; the sequence is RAAGPWH. A helical transmembrane segment spans residues 406–427; it reads MLFFIVIIFLGSFYLVNLILAI. The Cytoplasmic segment spans residues 428–812; sequence VAMSYDELQK…VWLKFQEWVS (385 aa). 2 positions are modified to phosphoserine; by PKA: S553 and S570. 2 disordered regions span residues 553-572 and 671-691; these read STTSLSLPGSPFNIRRGSRS and KESKLRNRNTRNQSVGATNGG. A compositionally biased stretch (polar residues) spans 680 to 691; sequence TRNQSVGATNGG. The stretch at 799-1069 is one II repeat; that stretch reads DCCWVWLKFQ…IAEAFNRIGR (271 aa). Residues 813–837 form a helical membrane-spanning segment; sequence LIVFDPFVELFITLCIVVNTMFMAM. The Extracellular segment spans residues 838–848; it reads DHHDMNKEMER. A helical transmembrane segment spans residues 849–873; sequence VLKSGNYFFTATFAIEATMKLMAMS. The Cytoplasmic segment spans residues 874–880; the sequence is PKYYFQE. Residues 881 to 900 form a helical membrane-spanning segment; that stretch reads GWNIFDFIIVALSLLELGLE. Topologically, residues 901 to 906 are extracellular; sequence GVQGLS. The chain crosses the membrane as a helical; Voltage-sensor span at residues 907-926; the sequence is VLRSFRLLRVFKLAKSWPTL. Topologically, residues 927–941 are cytoplasmic; it reads NLLISIMGRTMGALG. A helical membrane pass occupies residues 942-963; sequence NLTFVLCIIIFIFAVMGMQLFG. At 964-985 the chain is on the extracellular side; it reads KNYHDHKDRFPDGDLPRWNFTD. An N-linked (GlcNAc...) asparagine glycan is attached at N982. Positions 986–1006 form an intramembrane region, pore-forming; the sequence is FMHSFMIVFRVLCGEWIESMW. Topologically, residues 1007–1013 are extracellular; sequence DCMYVGD. A disulfide bond links C1008 and C1016. A helical transmembrane segment spans residues 1014–1041; that stretch reads VSCIPFFLATVVIGNLVVLNLFLALLLS. The Cytoplasmic segment spans residues 1042–1296; that stretch reads NFGSSSLSAP…WGNLRLKTFQ (255 aa). The segment at 1166 to 1240 is disordered; that stretch reads DMKNNKPKKS…LDEEGECEEG (75 aa). Polar residues predominate over residues 1177–1194; that stretch reads YLNNATDDDTASINSYGS. Positions 1199–1225 are enriched in basic and acidic residues; the sequence is PFKDESHKGSAETMEGEEKRDASKEDL. Positions 1226–1240 are enriched in acidic residues; that stretch reads GLDEELDEEGECEEG. An III repeat occupies 1284 to 1591; sequence WQGWGNLRLK…QKKYYNAMKK (308 aa). A helical membrane pass occupies residues 1297-1320; that stretch reads LIENKYFETAVITMILMSSLALAL. The Extracellular segment spans residues 1321-1334; the sequence is EDVHLPQRPILQDI. Residues 1335-1359 traverse the membrane as a helical segment; that stretch reads LYYMDRIFTVIFFLEMLIKWLALGF. The Cytoplasmic segment spans residues 1360-1365; the sequence is KVYFTN. A helical transmembrane segment spans residues 1366–1387; the sequence is AWCWLDFVIVMVSLINFVASLV. The Extracellular segment spans residues 1388–1391; sequence GAGG. A helical; Voltage-sensor transmembrane segment spans residues 1392–1413; that stretch reads IQAFKTMRTLRALRPLRAMSRM. Residues 1414 to 1432 lie on the Cytoplasmic side of the membrane; it reads QGMRVVVNALVQAIPSIFN. A helical membrane pass occupies residues 1433–1454; sequence VLLVCLIFWLIFAIMGVQLFAG. Over 1455 to 1495 the chain is Extracellular; the sequence is KYFKCEDMNGTKLSHEIIPNRNACESENYTWVNSAMNFDHV. N-linked (GlcNAc...) asparagine glycosylation is found at N1463 and N1482. Residues 1496 to 1517 constitute an intramembrane region (pore-forming); that stretch reads GNAYLCLFQVATFKGWIQIMND. Residues 1518-1533 are Extracellular-facing; it reads AIDSREVDKQPIRETN. The helical transmembrane segment at 1534–1560 threads the bilayer; it reads IYMYLYFVFFIIFGSFFTLNLFIGVII. Topologically, residues 1561 to 1614 are cytoplasmic; that stretch reads DNFNEQKKKAGGSLEMFMTEDQKKYYNAMKKMGSKKPLKAIPRPRWRPQAIVFE. The stretch at 1601–1862 is one IV repeat; the sequence is IPRPRWRPQA…NMYIAVILEN (262 aa). The chain crosses the membrane as a helical span at residues 1615–1638; it reads IVTDKKFDIIIMLFIGLNMFTMTL. Residues 1639-1649 are Extracellular-facing; that stretch reads DRYDASDTYNA. The helical transmembrane segment at 1650 to 1673 threads the bilayer; that stretch reads VLDYLNAIFVVIFSSECLLKIFAL. Residues 1674 to 1679 lie on the Cytoplasmic side of the membrane; that stretch reads RYHYFI. The helical transmembrane segment at 1680–1703 threads the bilayer; it reads EPWNLFDVVVVILSILGLVLSDII. Residues 1704–1713 are Extracellular-facing; the sequence is EKYFVSPTLL. Residues 1714–1735 traverse the membrane as a helical; Voltage-sensor segment; the sequence is RVVRVAKVGRVLRLVKGAKGIR. The Cytoplasmic segment spans residues 1736–1750; sequence TLLFALAMSLPALFN. Residues 1751–1773 traverse the membrane as a helical segment; it reads ICLLLFLVMFIFAIFGMSFFMHV. Topologically, residues 1774 to 1787 are extracellular; the sequence is KEKSGINDVYNFKT. Residues 1788–1810 constitute an intramembrane region (pore-forming); sequence FGQSMILLFQMSTSAGWDGVLDA. The Extracellular segment spans residues 1811–1835; it reads IINEEACDPPDNDKGYPGNCGSATV. Residues 1836–1860 traverse the membrane as a helical segment; the sequence is GITFLLSYLVISFLIVINMYIAVIL. The Cytoplasmic portion of the chain corresponds to 1861–2131; sequence ENYSQATEDV…PSITSRTADV (271 aa). An EF-hand domain is found at 1877–1912; sequence DDYDMYYEIWQQFDPEGTQYIRYDQLSEFLDVLEPP. The segment at 2001-2096 is disordered; the sequence is HKARGEGGGS…GSPGAGSAGR (96 aa). The span at 2021–2035 shows a compositional bias: acidic residues; that stretch reads GDPDAGDPAPDEATD. Positions 2068–2088 are enriched in low complexity; it reads AAAAAAAAAAAAAAGTTTAGS.

The protein belongs to the sodium channel (TC 1.A.1.10) family. Para subfamily.

The protein localises to the cell membrane. In terms of biological role, mediates the voltage-dependent sodium ion permeability of excitable membranes. Assuming opened or closed conformations in response to the voltage difference across the membrane, the protein forms a sodium-selective channel through which Na(+) ions may pass in accordance with their electrochemical gradient. This chain is Sodium channel protein para (para), found in Drosophila melanogaster (Fruit fly).